A 248-amino-acid polypeptide reads, in one-letter code: Phosphatidylglycerol--prolipoprotein diacylglyceryl transferase (248 aa).

Helical transmembrane passes span 6-26, 48-68, and 84-104; these read FSIF…GVIL, ILVW…VIFE, and GGGL…YVIC. Arginine 130 contacts a 1,2-diacyl-sn-glycero-3-phospho-(1'-sn-glycerol). The next 2 membrane-spanning stretches (helical) occupy residues 187–207 and 214–234; these read GQIT…VEGL and IGAL…GVIL.

Belongs to the Lgt family.

It localises to the cell membrane. The enzyme catalyses L-cysteinyl-[prolipoprotein] + a 1,2-diacyl-sn-glycero-3-phospho-(1'-sn-glycerol) = an S-1,2-diacyl-sn-glyceryl-L-cysteinyl-[prolipoprotein] + sn-glycerol 1-phosphate + H(+). It participates in protein modification; lipoprotein biosynthesis (diacylglyceryl transfer). Functionally, catalyzes the transfer of the diacylglyceryl group from phosphatidylglycerol to the sulfhydryl group of the N-terminal cysteine of a prolipoprotein, the first step in the formation of mature lipoproteins. The protein is Phosphatidylglycerol--prolipoprotein diacylglyceryl transferase of Finegoldia magna (strain ATCC 29328 / DSM 20472 / WAL 2508) (Peptostreptococcus magnus).